Here is an 83-residue protein sequence, read N- to C-terminus: Small ribosomal subunit protein eS21 (83 aa).

Belongs to the eukaryotic ribosomal protein eS21 family. Component of the 40S small ribosomal subunit. Interacts with sta.

Its subcellular location is the cytoplasm. The protein resides in the cytosol. It is found in the rough endoplasmic reticulum. In terms of biological role, may be an associated component of the ribosome rather than a core structural subunit. May act as a translation initiation factor. Has a role in regulation of cell proliferation in the hematopoietic organs and the imaginal disks of larva. This Drosophila grimshawi (Hawaiian fruit fly) protein is Small ribosomal subunit protein eS21 (RpS21).